The following is a 315-amino-acid chain: Ferrochelatase (315 aa).

Fe cation-binding residues include His193 and Glu273.

It belongs to the ferrochelatase family.

Its subcellular location is the cytoplasm. It carries out the reaction heme b + 2 H(+) = protoporphyrin IX + Fe(2+). It participates in porphyrin-containing compound metabolism; protoheme biosynthesis; protoheme from protoporphyrin-IX: step 1/1. Functionally, catalyzes the ferrous insertion into protoporphyrin IX. The protein is Ferrochelatase of Wolbachia pipientis wMel.